A 771-amino-acid polypeptide reads, in one-letter code: Leucine-rich repeat and fibronectin type III domain-containing protein 1 (771 aa).

An N-terminal signal peptide occupies residues 1–31; the sequence is MAPGPFSSALLSPPPAALPFLLLLWAGASRG. In terms of domain architecture, LRRNT spans 32–65; it reads QPCPGRCICQNVAPTLTMLCAKTGLLFVPPAIDR. The Extracellular segment spans residues 32–536; that stretch reads QPCPGRCICQ…LRAHFLGGTM (505 aa). LRR repeat units lie at residues 66-87, 90-111, 114-135, 138-159, 163-184, 187-208, and 211-232; these read RVVE…DFAN, SLVH…AFAD, ALRA…QLRG, NLRH…AFDA, TVED…AVGQ, NLNT…TFVQ, and KLVR…GLFL. Residue N87 is glycosylated (N-linked (GlcNAc...) asparagine). Residues 252–298 form the LRRCT domain; it reads NPLHCNCELLWLRRLTREDDLETCATPEHLTDRYFWSIPEEEFLCEP. Residues 299–386 form the Ig-like domain; that stretch reads PLITRQAGGR…GEATAPVEVC (88 aa). C321 and C370 are joined by a disulfide. N343 carries an N-linked (GlcNAc...) asparagine glycan. The interval 397–422 is disordered; it reads PAAPPPLTEPGSSDIATPGRPGANDS. Positions 424-520 constitute a Fibronectin type-III domain; that stretch reads AERRLVAAEL…GCVQFTTAGD (97 aa). The helical transmembrane segment at 537–557 threads the bilayer; the sequence is IIAIGGVIVASVLVFIVLLMI. Topologically, residues 558-771 are cytoplasmic; it reads RYKVYGDGDS…STEWMLESTV (214 aa). Residues S613 and S718 each carry the phosphoserine modification. Residues 654 to 743 are disordered; it reads PSEETSGEES…HLDGAGGGAA (90 aa). Residues 719–732 are compositionally biased toward basic residues; that stretch reads YPRRARRTKRHRST. The short motif at 768–771 is the PDZ-binding element; the sequence is ESTV.

It belongs to the LRFN family. In terms of assembly, can form heteromeric complexes with LRFN2, LRFN3, LRFN4 and LRFN5. Forms homomeric complexes, but not across cell junctions. Interacts with DLG1, DLG2, DLG3 and DLG4. Interacts with 2 AMPA receptor subunits GRIA1 and GRIA2 and NMDA receptor subunit GRIN1. Glycosylated.

The protein localises to the membrane. Its subcellular location is the synapse. It is found in the postsynaptic density membrane. In terms of biological role, promotes neurite outgrowth in hippocampal neurons. Involved in the regulation and maintenance of excitatory synapses. Induces the clustering of excitatory postsynaptic proteins, including DLG4, DLGAP1, GRIA1 and GRIN1. The protein is Leucine-rich repeat and fibronectin type III domain-containing protein 1 (LRFN1) of Homo sapiens (Human).